We begin with the raw amino-acid sequence, 400 residues long: Unsaturated glucuronyl hydrolase (400 aa).

The signal sequence occupies residues 1-20; sequence MRKLVYLVLVLGLTFLNVRC. Catalysis depends on Asp-120, which acts as the Nucleophile. Asp-181 functions as the Proton donor in the catalytic mechanism.

Belongs to the glycosyl hydrolase 88 family.

It is found in the cell surface. Functionally, unsaturated glucuronyl hydrolase involved in ulvan degradation. Ulvan is the main polysaccharide component of the Ulvales (green seaweed) cell wall. It is composed of disaccharide building blocks comprising 3-sulfated rhamnose (Rha3S) linked to D-glucuronic acid (GlcA), L-iduronic acid (IduA), or D-xylose (Xyl). Unsaturated glucuronyl hydrolase catalyzes the cleavage of the unsaturated 4-deoxy-L-threo-hex-4-enopyranosiduronic acid (deltaUA) at the non-reducing end of ulvan oligomers, thus forming 5-dehydro-4-deoxy-D-glucuronate. In Formosa agariphila (strain DSM 15362 / KCTC 12365 / LMG 23005 / KMM 3901 / M-2Alg 35-1), this protein is Unsaturated glucuronyl hydrolase.